Consider the following 130-residue polypeptide: Protein ApaG (130 aa).

Residues 3–127 enclose the ApaG domain; it reads RALTKDIEVV…FSLDSPGLLR (125 aa).

The polypeptide is Protein ApaG (Rhizobium leguminosarum bv. trifolii (strain WSM2304)).